The following is a 404-amino-acid chain: MYEKTAEHFEQKYKNLPEGHLLVNLGPSHPATHGILQNVIQIDGERIVEAESVIGYVHRCFEKLGERYTYNQFLVCTDRMNYVSTPLNNIGWILAVEKMMQVEVPDRVTYVRMIISELSRIMDHIICLGILGVDLGAFSGMLHLFHHRENIYQIIEKLTGARLTTTFCRIGGLERDIYPEFEKEVKLVCKGLKPAIEEFNSLLLKNKIFLGRTEGIGGISAENAIAYGFSGPNLRAAGVDWDVRKDKPYMLYDKVDFDVPIGEDGSVLHRSLVRMEEMRQSIRIIEQLVDGIPSGAWHADLPHAYLPEKNKVYNNMEELIYHFKIIMHGVKVPPGEHYMATEAANGELGFYIVSEGEKSPWRVHVRRPCFWYYQSFAELVRGGLLADSVATMSSLNVIAGELDC.

Belongs to the complex I 49 kDa subunit family. As to quaternary structure, NDH-1 is composed of 14 different subunits. Subunits NuoB, C, D, E, F, and G constitute the peripheral sector of the complex.

It localises to the cell inner membrane. The enzyme catalyses a quinone + NADH + 5 H(+)(in) = a quinol + NAD(+) + 4 H(+)(out). In terms of biological role, NDH-1 shuttles electrons from NADH, via FMN and iron-sulfur (Fe-S) centers, to quinones in the respiratory chain. The immediate electron acceptor for the enzyme in this species is believed to be ubiquinone. Couples the redox reaction to proton translocation (for every two electrons transferred, four hydrogen ions are translocated across the cytoplasmic membrane), and thus conserves the redox energy in a proton gradient. The sequence is that of NADH-quinone oxidoreductase subunit D from Leptospira borgpetersenii serovar Hardjo-bovis (strain JB197).